We begin with the raw amino-acid sequence, 362 residues long: MANPVPSACCVVLAAVVVVYAQRHSQQDSHIQYERVGADVTMKCGSMDWDAAVTWTANGTDIDDSHLNGSYLILKNVDLTQSGQYSCYEGSSWHLKYQTYLRVGVPPKEPVLMCRSNNYPKGFYCSWHLPSPTYIPNSFNISVIHGTREMVCEKDIFPKNRCHIRYLQLFSTVKYKVTLTVTNALGKNSTTLTFDEFAIVKPDPPESVVAKPVPNNPRRLEVSWQNPSSWPDPESFPLKFFLRYRPLILDQWQHVELSDGTSHTITDAYAGKEYIIQVAAKDNDIGTWSDWSVAVHATPWTEEPKHLTTEVQITETTSTSTSSFMPPPTTKICDKGAGVGSGAVAVCWTAGLVLAAYGVLFI.

The first 19 residues, M1–V19, serve as a signal peptide directing secretion. The 81-residue stretch at R23 to V103 folds into the Ig-like C2-type domain. Cysteines 44 and 87 form a disulfide. Residues N58, N68, N140, and N188 are each glycosylated (N-linked (GlcNAc...) asparagine). Fibronectin type-III domains are found at residues P106–D203 and P204–P304. A WSXWS motif motif is present at residues W288 to S292. D334 is lipidated: GPI-anchor amidated aspartate. The propeptide at K335–I362 is removed in mature form.

The protein belongs to the type I cytokine receptor family. Type 3 subfamily. Heterotrimer of the alpha subunit, LIFR and IL6ST. Highly expressed in nervous system. Also found in skeletal muscle.

It is found in the cell membrane. Its function is as follows. Binds to CNTF (GPA). The alpha subunit provides the receptor specificity. The sequence is that of Ciliary neurotrophic factor receptor subunit alpha (CNTFR) from Gallus gallus (Chicken).